The primary structure comprises 543 residues: CTP synthase (543 aa).

The segment at 1–265 is amidoligase domain; it reads MARFIFITGG…DSEVLRAFGI (265 aa). Ser-13 lines the CTP pocket. Ser-13 is a binding site for UTP. Residue 14–19 participates in ATP binding; that stretch reads SLGKGL. Residue Tyr-54 participates in L-glutamine binding. Asp-71 provides a ligand contact to ATP. Positions 71 and 139 each coordinate Mg(2+). Residues 146–148, 186–191, and Lys-222 each bind CTP; these read DIE and KTKPTQ. Residues 186–191 and Lys-222 contribute to the UTP site; that span reads KTKPTQ. The Glutamine amidotransferase type-1 domain maps to 291-542; it reads TIGVVGKYVS…IEAAVKQSRL (252 aa). L-glutamine is bound at residue Gly-354. The Nucleophile; for glutamine hydrolysis role is filled by Cys-381. L-glutamine-binding positions include 382–385, Glu-405, and Arg-470; that span reads LGMQ. Residues His-515 and Glu-517 contribute to the active site.

This sequence belongs to the CTP synthase family. Homotetramer.

The catalysed reaction is UTP + L-glutamine + ATP + H2O = CTP + L-glutamate + ADP + phosphate + 2 H(+). It catalyses the reaction L-glutamine + H2O = L-glutamate + NH4(+). The enzyme catalyses UTP + NH4(+) + ATP = CTP + ADP + phosphate + 2 H(+). It functions in the pathway pyrimidine metabolism; CTP biosynthesis via de novo pathway; CTP from UDP: step 2/2. Allosterically activated by GTP, when glutamine is the substrate; GTP has no effect on the reaction when ammonia is the substrate. The allosteric effector GTP functions by stabilizing the protein conformation that binds the tetrahedral intermediate(s) formed during glutamine hydrolysis. Inhibited by the product CTP, via allosteric rather than competitive inhibition. Functionally, catalyzes the ATP-dependent amination of UTP to CTP with either L-glutamine or ammonia as the source of nitrogen. Regulates intracellular CTP levels through interactions with the four ribonucleotide triphosphates. In Sphingopyxis alaskensis (strain DSM 13593 / LMG 18877 / RB2256) (Sphingomonas alaskensis), this protein is CTP synthase.